Here is a 409-residue protein sequence, read N- to C-terminus: E3 ubiquitin-protein ligase MARCHF4 (409 aa).

An N-terminal signal peptide occupies residues M1–G17. Positions G92–A133 are disordered. Residues P102 to P112 show a composition bias toward pro residues. The RING-CH-type zinc-finger motif lies at D154–I214. Zn(2+)-binding residues include C162, C165, C178, C180, H188, C191, C204, and C207. The next 2 helical transmembrane spans lie at L242–S262 and L271–I291. Disordered regions lie at residues E323–S372 and P389–V409. Residues G328 to L343 are compositionally biased toward polar residues.

It is found in the golgi apparatus membrane. The catalysed reaction is S-ubiquitinyl-[E2 ubiquitin-conjugating enzyme]-L-cysteine + [acceptor protein]-L-lysine = [E2 ubiquitin-conjugating enzyme]-L-cysteine + N(6)-ubiquitinyl-[acceptor protein]-L-lysine.. The protein operates within protein modification; protein ubiquitination. Functionally, E3 ubiquitin-protein ligase that may mediate ubiquitination of MHC-I and CD4, and promote their subsequent endocytosis and sorting to lysosomes via multivesicular bodies. E3 ubiquitin ligases accept ubiquitin from an E2 ubiquitin-conjugating enzyme in the form of a thioester and then directly transfer the ubiquitin to targeted substrates. This is E3 ubiquitin-protein ligase MARCHF4 (Marchf4) from Mus musculus (Mouse).